Reading from the N-terminus, the 1021-residue chain is Transmembrane protein 132A (1021 aa).

An N-terminal signal peptide occupies residues 1–32; the sequence is MTERAAAAPRGPYGAWLCLLVALALEVVRVGS. Residues 33–848 lie on the Extracellular side of the membrane; that stretch reads NQNTLDPIYL…VTDLELGMYA (816 aa). Residues 207–226 are disordered; the sequence is PAGEGPGGCGPGTEEEPKEQ. N-linked (GlcNAc...) asparagine glycosylation occurs at asparagine 276. A binds to HSPA5/GRP78 region spans residues 606–913; it reads IEVRSPLSDS…QLDRCSSSSP (308 aa). The tract at residues 666 to 1021 is confers cellular localization similar to full-length form; sequence LPAPKQEVAL…NYMERIRGSS (356 aa). The disordered stretch occupies residues 793 to 835; sequence AGDMGSHVGPGIRGKFERAEEEAGKEENEAKEEEEDEEEMVPA. Residues 806–820 are compositionally biased toward basic and acidic residues; sequence GKFERAEEEAGKEEN. A compositionally biased stretch (acidic residues) spans 821 to 832; the sequence is EAKEEEEDEEEM. A helical membrane pass occupies residues 849–869; the sequence is LLGIFCLAFLIFLVNGVVFVL. At 870-1021 the chain is on the cytoplasmic side; that stretch reads RYQRKEPPDS…NYMERIRGSS (152 aa). The interval 903 to 955 is disordered; sequence RQLDRCSSSSPPKGEGGCPCESGAGGDTSTVAPSASESPAGSTSTLARKEAGG. Residues 929-948 show a composition bias toward polar residues; that stretch reads DTSTVAPSASESPAGSTSTL.

This sequence belongs to the TMEM132 family. In terms of assembly, interacts with HSPA5/GRP78. Expressed in the brain in neuronal cells of the hypothalamus, thalamus, cerebral cortex, amygdala, and cerebellum.

It localises to the golgi apparatus membrane. Its subcellular location is the endoplasmic reticulum membrane. May play a role in embryonic and postnatal development of the brain. Increased resistance to cell death induced by serum starvation in cultured cells. Regulates cAMP-induced GFAP gene expression via STAT3 phosphorylation. The polypeptide is Transmembrane protein 132A (Tmem132a) (Rattus norvegicus (Rat)).